The primary structure comprises 446 residues: Probable carboxylesterase 16 (446 aa).

The interval 84–131 (PEPDSLRHKDNYNHQPRSDRRHSYGPNHNSPAPAERNESRRNSYGCNN) is disordered. Positions 87 to 105 (DSLRHKDNYNHQPRSDRRH) are enriched in basic and acidic residues. Positions 158-160 (HGG) match the Involved in the stabilization of the negatively charged intermediate by the formation of the oxyanion hole motif. Active-site residues include S274, D378, and H408.

Belongs to the 'GDXG' lipolytic enzyme family. In terms of tissue distribution, expressed in roots, leaves, stems, flowers and siliques.

It carries out the reaction a carboxylic ester + H2O = an alcohol + a carboxylate + H(+). In terms of biological role, carboxylesterase acting on esters with varying acyl chain length. The protein is Probable carboxylesterase 16 (CXE16) of Arabidopsis thaliana (Mouse-ear cress).